A 369-amino-acid polypeptide reads, in one-letter code: C-C chemokine receptor type 9 (369 aa).

Over 1–48 (MMPTELTSLIPGMFDDFSYDSTASTDDYMNLNFSSFFCKKNNVRQFAS) the chain is Extracellular. A glycan (N-linked (GlcNAc...) asparagine) is linked at Asn32. 2 cysteine pairs are disulfide-bonded: Cys38-Cys289 and Cys119-Cys198. Residues 49-74 (HFLPPLYWLVFIVGTLGNSLVILVYW) traverse the membrane as a helical segment. At 75–85 (YCTRVKTMTDM) the chain is on the cytoplasmic side. The helical transmembrane segment at 86–109 (FLLNLAIADLLFLATLPFWAIAAA) threads the bilayer. Residues 110 to 120 (GQWMFQTFMCK) lie on the Extracellular side of the membrane. The chain crosses the membrane as a helical span at residues 121–150 (VVNSMYKMNFYSCVLLIMCISVDRYIAIVQ). The Cytoplasmic segment spans residues 151–159 (AMKAQVWRQ). Residues 160-185 (KRLLYSKMVCITIWVMAAVLCTPEIL) traverse the membrane as a helical segment. Residues 186–208 (YSQVSGESGIATCTMVYPKDKNA) are Extracellular-facing. A helical membrane pass occupies residues 209–243 (KLKSAVLILKVTLGFFLPFMVMAFCYTIIIHTLVQ). Residues 244–248 (AKKSS) lie on the Cytoplasmic side of the membrane. A helical transmembrane segment spans residues 249–283 (KHKALKVTITVLTVFIMSQFPYNSILVVQAVDAYA). Over 284–290 (MFISNCT) the chain is Extracellular. A helical transmembrane segment spans residues 291 to 321 (ISTNIDICFQVTQTIAFFHSCLNPVLYVFVG). The Cytoplasmic segment spans residues 322–369 (ERFRRDLVKTLKNLGCISQAQWVSFTRREGSLKLSSMLLETTSGALSL).

It belongs to the G-protein coupled receptor 1 family. As to expression, highly expressed in the thymus and low in lymph nodes and spleen.

The protein localises to the cell membrane. Receptor for chemokine SCYA25/TECK. Subsequently transduces a signal by increasing the intracellular calcium ions level. This Mus musculus (Mouse) protein is C-C chemokine receptor type 9 (Ccr9).